Here is a 357-residue protein sequence, read N- to C-terminus: Phenylalanine--tRNA ligase alpha subunit (357 aa).

Residue Glu257 participates in Mg(2+) binding.

This sequence belongs to the class-II aminoacyl-tRNA synthetase family. Phe-tRNA synthetase alpha subunit type 1 subfamily. As to quaternary structure, tetramer of two alpha and two beta subunits. Requires Mg(2+) as cofactor.

It is found in the cytoplasm. The enzyme catalyses tRNA(Phe) + L-phenylalanine + ATP = L-phenylalanyl-tRNA(Phe) + AMP + diphosphate + H(+). The chain is Phenylalanine--tRNA ligase alpha subunit from Ruegeria pomeroyi (strain ATCC 700808 / DSM 15171 / DSS-3) (Silicibacter pomeroyi).